The following is a 346-amino-acid chain: Serine/threonine-protein phosphatase PP1(4.8) (346 aa).

Residues glutamine 46 to threonine 65 are disordered. Positions 102, 104, 130, and 162 each coordinate Mn(2+). The Proton donor role is filled by histidine 163. Positions 211 and 287 each coordinate Mn(2+).

The protein belongs to the PPP phosphatase family. PP-1 subfamily. Mn(2+) is required as a cofactor.

It catalyses the reaction O-phospho-L-seryl-[protein] + H2O = L-seryl-[protein] + phosphate. The enzyme catalyses O-phospho-L-threonyl-[protein] + H2O = L-threonyl-[protein] + phosphate. This chain is Serine/threonine-protein phosphatase PP1(4.8), found in Trypanosoma brucei brucei.